We begin with the raw amino-acid sequence, 586 residues long: Cytosolic Fe-S cluster assembly factor NAR1 (586 aa).

The [4Fe-4S] cluster site is built by Cys-20, Cys-73, Cys-76, Cys-79, Cys-220, Cys-275, Cys-462, and Cys-466.

Belongs to the NARF family.

Component of the cytosolic Fe/S protein assembly machinery. Required for maturation of extramitochondrial Fe/S proteins. May play a role in the transfer of pre-assembled Fe/S clusters to target apoproteins. The chain is Cytosolic Fe-S cluster assembly factor NAR1 (NAR1) from Chaetomium globosum (strain ATCC 6205 / CBS 148.51 / DSM 1962 / NBRC 6347 / NRRL 1970) (Soil fungus).